Reading from the N-terminus, the 150-residue chain is Monooxygenase dmxR10 (150 aa).

It belongs to the avfA family.

It functions in the pathway secondary metabolite biosynthesis. Functionally, monooxygenase; part of the gene cluster that mediates the biosynthesis of the dimeric xanthones cryptosporioptides. The pathway begins with the synthesis of atrochrysone thioester by the polyketide synthase dmx-nrPKS. The atrochrysone carboxyl ACP thioesterase dmxR1 then breaks the thioester bond and releases the atrochrysone carboxylic acid from dmx-nrPKS. Atrochrysone carboxylic acid is decarboxylated by the decarboxylase dmxR15, and oxidized by the anthrone oxygenase dmxR16 to yield emodin. Emodin is then reduced to emodin hydroquinone by the oxidoreductase dmxR7. A-ring reduction by the short chain dehydrogenase dmxR18, dehydration by the scytalone dehydratase-like protein dmxR17 and probable spontaneous re-oxidation, results in overall deoxygenation to chrysophanol. Baeyer-Villiger oxidation by the Baeyer-Villiger monooxygenase (BVMO) dmxR6 then yields monodictylactone in equilibrium with monodictyphenone. In the case of the cryptosporioptides biosynthesis, monodictylactone is reduced at C-12 to an alcohol (by the short chain dehydrogenases dmxR12 or dmxR8) and hydroxylated at C-5 by dmxR9, yielding the electron-rich aromatic which could eliminate H(2)O to form the ortho-quinonemethide, followed by tautomerisation to paraquinone and complete the formal reduction to produce the 10-methylgroup. Conjugate addition of C-4a-OH to the resulting paraquinone by the monooxygenase dmxR10 then gives cyclohexadienone, which is then reduced at C-5 by the short chain dehydrogenase dmxR3 to give the dihydroxanthone. The 6,7-epoxide in the cryptosporioptides could be introduced by the cytochrome P450 monooxygenase dmxL3. The highly reducing PKS dmxL2 manufactures butyrate, which is further carboxylated by dmxL1 to form ethylmalonate. It is not yet clear whether the carboxylation occurs while the butyrate is attached to the ACP of dmxL2, but this unusual fungal metabolite could then be esterified to O-5 by the O-acetyltransferase dmxR13. Finally, dimerization performed by dmxR5 gives the observed dimers cryptosporioptides A, B and C as the final products of the pathway. This is Monooxygenase dmxR10 from Cryptosporiopsis sp. (strain 8999).